The following is a 136-amino-acid chain: Large ribosomal subunit protein uL16 (136 aa).

It belongs to the universal ribosomal protein uL16 family. Part of the 50S ribosomal subunit.

Binds 23S rRNA and is also seen to make contacts with the A and possibly P site tRNAs. In Rickettsia prowazekii (strain Madrid E), this protein is Large ribosomal subunit protein uL16.